The primary structure comprises 887 residues: MAPAAHRDGAAEAVGQRVFHFGKGRSDGNKTMKDLLGGKGANLAEMASIGLSVPPGFTVSTEACQQYQAQKAMPAGLWDEILAALTWVEGNMGAVLGDPRRPLLLSVRSGAAVSMPGMMDTVLNLGLNDHVVAGLAHRSGERFAYDSYRRFLDMFGNVVMDIPHSLFEEKIEAMKAALGLRNDTELTARDLKELVAQYKNVYVEAKGEEFPSDPKKQLHLSVLAVFNSWDSARAKKYRSINQITGLKGTAVNVQCMVFGNMGDTSGTGVLFTRNPSTGERKLYGEFLVNAQGEDVVAGIRTPQDLDTMKDCMPEPYAELVENCKILESHYKEMMDIEFTVQENRLWMLQCRTGKRTGKGAVKIAVDMVNEGLIDRRSAIKMVEPRHLDQLLHPQFESPSSYGDKVIATGLPASPGAAVGQIVFTADDAEAWHAQGKSVILVRTETSPEDVGGMNAAAGILTARGGMTSHAAVVARGWGKCCVAGCSGIRVNDAEKVVLVADKVLCEGEWLSLNGSTGEVILGKLPLSPPALSGDLGEFMSWVDEVKKLKVKANADTPADALTARNNGAEGIGLCRTEHMFFSSDERIKAMRQMIMAETIEHRQIALDRLLPYQRLDFEGIFRAMDGLPVTIRLLDPPLHEFLPEGNVEDMVRLLSSGNVYTQEEILTRIEKLSEVNPMLGFRGCRLGISYPELTAMQARAIFEAAISMTEQGVKVFPEIMVPLIGTPQELAQQVDVIREVAEKVFANAETTISYKIGSMIEVPRAALIADEIAALAEFFSFGTNDLTQMTFGYSRDDVGKFLPTYLSKGILQNDPFEVFDQKGVGELVKVAVERGRKARPDLEVGICGEHGGEPSSVAFFAKVGLNYVSCSPFRVPIARLAAAQVML.

Residue Thr467 is modified to Phosphothreonine; by PDRP1. The Tele-phosphohistidine intermediate role is filled by His469. Arg575, Arg632, Glu761, Gly782, Thr783, Asn784, and Asp785 together coordinate substrate. Glu761 provides a ligand contact to Mg(2+). Asp785 contributes to the Mg(2+) binding site. Cys847 functions as the Proton donor in the catalytic mechanism.

The protein belongs to the PEP-utilizing enzyme family. Mg(2+) is required as a cofactor.

Its subcellular location is the cytoplasm. It catalyses the reaction pyruvate + phosphate + ATP = phosphoenolpyruvate + AMP + diphosphate + H(+). Formation of phosphoenolpyruvate. The sequence is that of Pyruvate, phosphate dikinase 2 (PPDK2) from Oryza sativa subsp. japonica (Rice).